Reading from the N-terminus, the 243-residue chain is MAKVEQVLSLEPQHELKFRGPFTDVVTTNLKLGNPTDRNVCFKVKTTAPRRYCVRPNSGVIDAGASLNVSVMLQPFDYDPNEKSKHKFMVQSMFAPPDTSDMEAVWKEAKPEDLMDSKLRCVFELPAENAKPHDVEINKIMPTSASKTEAPVAAKPLTSPLDDAEVKKVMEECRRLQGEVQRLREESRQLKEEDGLRARKALPSNSPMAALAASGKEEGLSARLLALVVLFFIVGVIIGKIAL.

At A2 the chain carries N-acetylalanine. Residues 2-218 (AKVEQVLSLE…AALAASGKEE (217 aa)) are Cytoplasmic-facing. One can recognise an MSP domain in the interval 7-124 (VLSLEPQHEL…MDSKLRCVFE (118 aa)). S146 is subject to Phosphoserine. Residue K147 forms a Glycyl lysine isopeptide (Lys-Gly) (interchain with G-Cter in SUMO1) linkage. S159 carries the phosphoserine modification. Positions 161-196 (LDDAEVKKVMEECRRLQGEVQRLREESRQLKEEDGL) form a coiled coil. Position 206 is a phosphoserine (S206). The helical; Anchor for type IV membrane protein transmembrane segment at 219–239 (GLSARLLALVVLFFIVGVIIG) threads the bilayer.

The protein belongs to the VAMP-associated protein (VAP) (TC 9.B.17) family. As to quaternary structure, homodimer, and heterodimer with VAPA. Interacts with VAMP1 and VAMP2. Interacts (via MSP domain) with ZFYVE27. Interacts with RMDN3. Interacts with KIF5A in a ZFYVE27-dependent manner. Interacts (via MSP domain) with STARD3 (via phospho-FFAT motif). Interacts with STARD3NL (via FFAT motif). Interacts with CERT1. Interacts with PLEKHA3 and SACM1L to form a ternary complex. Interacts with VPS13A (via FFAT motif). Interacts with RB1CC1 (via phosphorylated FFAT motif), MIGA2 (via phosphorylated FFAT motif), RMDN3 (via phosphorylated FFAT motif), OSBPL1A (via FFAT motif), KCNB1 (via phosphorylated FFAT motif) and KCNB2 (via phosphorylated FFAT motif). Interacts (via MSP domain) with WDR44; the interactions connect the endoplasmic reticulum (ER) with the endosomal tubule. As to expression, ubiquitous.

It localises to the endoplasmic reticulum membrane. In terms of biological role, endoplasmic reticulum (ER)-anchored protein that mediates the formation of contact sites between the ER and endosomes via interaction with FFAT motif-containing proteins such as STARD3 or WDR44. Interacts with STARD3 in a FFAT motif phosphorylation dependent manner. Via interaction with WDR44 participates in neosynthesized protein export. Participates in the endoplasmic reticulum unfolded protein response (UPR) by inducing ERN1/IRE1 activity. Involved in cellular calcium homeostasis regulation. The sequence is that of Vesicle-associated membrane protein-associated protein B from Rattus norvegicus (Rat).